The chain runs to 472 residues: 2-oxoisovalerate dehydrogenase subunit alpha 1, mitochondrial (472 aa).

A mitochondrion-targeting transit peptide spans 1-56 (MAIWFARSKTLVSSLRHNLNLSTILIKRDYSHRPIFYTTSQLSSTAYLSPFGSLRH). 185–187 (QYR) serves as a coordination point for thiamine diphosphate. Positions 234, 239, and 240 each coordinate K(+).

It belongs to the BCKDHA family. Heterotetramer of alpha and beta chains. It depends on thiamine diphosphate as a cofactor.

Its subcellular location is the mitochondrion matrix. The catalysed reaction is N(6)-[(R)-lipoyl]-L-lysyl-[protein] + 3-methyl-2-oxobutanoate + H(+) = N(6)-[(R)-S(8)-2-methylpropanoyldihydrolipoyl]-L-lysyl-[protein] + CO2. Its function is as follows. The branched-chain alpha-keto dehydrogenase complex catalyzes the overall conversion of alpha-keto acids to acyl-CoA and CO(2). It contains multiple copies of three enzymatic components: branched-chain alpha-keto acid decarboxylase (E1), lipoamide acyltransferase (E2) and lipoamide dehydrogenase (E3). Required during sugar starvation. In Arabidopsis thaliana (Mouse-ear cress), this protein is 2-oxoisovalerate dehydrogenase subunit alpha 1, mitochondrial.